A 585-amino-acid chain; its full sequence is PiggyBac transposable element-derived protein 4 (585 aa).

The disordered stretch occupies residues 1 to 73 (MSNPRKRSIP…STSSDSGRSM (73 aa)). Residues 25–40 (DSFDESDFSEIDDSDN) show a composition bias toward acidic residues. Residues 47-61 (EADKIRPLSHLESDG) are compositionally biased toward basic and acidic residues. Over residues 62–72 (KSSTSSDSGRS) the composition is skewed to low complexity.

The chain is PiggyBac transposable element-derived protein 4 (PGBD4) from Homo sapiens (Human).